The chain runs to 367 residues: Ganglioside-induced differentiation-associated protein 1-like 1 (367 aa).

Residues 45–126 form the GST N-terminal domain; it reads ESLVLYHWTQ…YVERTFTGEH (82 aa). The region spanning 174 to 341 is the GST C-terminal domain; that stretch reads PKYATAEIRR…RLVKRKPPSF (168 aa).

Belongs to the GST superfamily.

The chain is Ganglioside-induced differentiation-associated protein 1-like 1 (GDAP1L1) from Homo sapiens (Human).